A 121-amino-acid chain; its full sequence is MAFDKDAIIASLKEASISDLNDLVKAIEEEFDVSAAAPVAVAGAAGGEAAAKDSFTVELTSAGSAKVKVIKVVKDITGLGLKDAKALVDGAPSNVKEDVKEDEANDIKAKLEEVGASVTLK.

It belongs to the bacterial ribosomal protein bL12 family. In terms of assembly, homodimer. Part of the ribosomal stalk of the 50S ribosomal subunit. Forms a multimeric L10(L12)X complex, where L10 forms an elongated spine to which 2 to 4 L12 dimers bind in a sequential fashion. Binds GTP-bound translation factors.

Its function is as follows. Forms part of the ribosomal stalk which helps the ribosome interact with GTP-bound translation factors. Is thus essential for accurate translation. This chain is Large ribosomal subunit protein bL12, found in Limosilactobacillus fermentum (strain NBRC 3956 / LMG 18251) (Lactobacillus fermentum).